Consider the following 168-residue polypeptide: MATATYPPPPPYYRLYKDFSENTDSAPEPPPPIEGTYVCFGGNYTTEDVLPSLEEQGVPQLYPKDSNLDYKKELRSLNRELQLHILELADVLVDRPSQYAKRIGEISSIFKNLHHLLNSLRPHQARATLIHIMELQIQQRKQAVEDIKRRREEAQGLLKDAFVTLDGQ.

The segment covering M1–Y12 has biased composition (pro residues). The disordered stretch occupies residues M1 to I33. 2 coiled-coil regions span residues K64–L92 and I132–F162.

The protein belongs to the Mediator complex subunit 7 family. As to quaternary structure, component of the Mediator complex. Interacts with MEE14/CBP1.

Its subcellular location is the nucleus. Functionally, component of the Mediator complex, a coactivator involved in the regulated transcription of nearly all RNA polymerase II-dependent genes. Mediator functions as a bridge to convey information from gene-specific regulatory proteins to the basal RNA polymerase II transcription machinery. The Mediator complex, having a compact conformation in its free form, is recruited to promoters by direct interactions with regulatory proteins and serves for the assembly of a functional pre-initiation complex with RNA polymerase II and the general transcription factors. This is Mediator of RNA polymerase II transcription subunit 7b (MED7B) from Arabidopsis thaliana (Mouse-ear cress).